The primary structure comprises 360 residues: UDP-N-acetylglucosamine--N-acetylmuramyl-(pentapeptide) pyrophosphoryl-undecaprenol N-acetylglucosamine transferase (360 aa).

UDP-N-acetyl-alpha-D-glucosamine contacts are provided by residues 11–13 (TGG), Asn-117, Arg-160, Ser-192, and Gln-294.

The protein belongs to the glycosyltransferase 28 family. MurG subfamily.

The protein resides in the cell inner membrane. The catalysed reaction is di-trans,octa-cis-undecaprenyl diphospho-N-acetyl-alpha-D-muramoyl-L-alanyl-D-glutamyl-meso-2,6-diaminopimeloyl-D-alanyl-D-alanine + UDP-N-acetyl-alpha-D-glucosamine = di-trans,octa-cis-undecaprenyl diphospho-[N-acetyl-alpha-D-glucosaminyl-(1-&gt;4)]-N-acetyl-alpha-D-muramoyl-L-alanyl-D-glutamyl-meso-2,6-diaminopimeloyl-D-alanyl-D-alanine + UDP + H(+). The protein operates within cell wall biogenesis; peptidoglycan biosynthesis. In terms of biological role, cell wall formation. Catalyzes the transfer of a GlcNAc subunit on undecaprenyl-pyrophosphoryl-MurNAc-pentapeptide (lipid intermediate I) to form undecaprenyl-pyrophosphoryl-MurNAc-(pentapeptide)GlcNAc (lipid intermediate II). The chain is UDP-N-acetylglucosamine--N-acetylmuramyl-(pentapeptide) pyrophosphoryl-undecaprenol N-acetylglucosamine transferase from Rickettsia felis (strain ATCC VR-1525 / URRWXCal2) (Rickettsia azadi).